The sequence spans 137 residues: Large ribosomal subunit protein uL16 (137 aa).

This sequence belongs to the universal ribosomal protein uL16 family. In terms of assembly, part of the 50S ribosomal subunit.

Its function is as follows. Binds 23S rRNA and is also seen to make contacts with the A and possibly P site tRNAs. In Stutzerimonas stutzeri (strain A1501) (Pseudomonas stutzeri), this protein is Large ribosomal subunit protein uL16.